An 88-amino-acid polypeptide reads, in one-letter code: UPF0297 protein BcerKBAB4_4234 (88 aa).

This sequence belongs to the UPF0297 family.

The protein is UPF0297 protein BcerKBAB4_4234 of Bacillus mycoides (strain KBAB4) (Bacillus weihenstephanensis).